The sequence spans 52 residues: Insulin (52 aa).

3 cysteine pairs are disulfide-bonded: C7/C38, C19/C51, and C37/C42.

This sequence belongs to the insulin family. In terms of assembly, heterodimer of a B chain and an A chain linked by two disulfide bonds.

Its subcellular location is the secreted. Its function is as follows. Insulin decreases blood glucose concentration. It increases cell permeability to monosaccharides, amino acids and fatty acids. It accelerates glycolysis, the pentose phosphate cycle, and glycogen synthesis in liver. This is Insulin (ins) from Amia calva (Bowfin).